We begin with the raw amino-acid sequence, 391 residues long: U-box domain-containing protein 57 (391 aa).

An MIF4G domain is found at 1–178 (MVKNSYVLFA…DLTERLLQVE (178 aa)). The U-box domain occupies 322–391 (QPPPSFICPI…LRSAIEELGR (70 aa)).

The catalysed reaction is S-ubiquitinyl-[E2 ubiquitin-conjugating enzyme]-L-cysteine + [acceptor protein]-L-lysine = [E2 ubiquitin-conjugating enzyme]-L-cysteine + N(6)-ubiquitinyl-[acceptor protein]-L-lysine.. Its pathway is protein modification; protein ubiquitination. Functionally, functions as an E3 ubiquitin ligase. This Arabidopsis thaliana (Mouse-ear cress) protein is U-box domain-containing protein 57 (PUB57).